Consider the following 165-residue polypeptide: UPF0303 protein Bxeno_A1932 (165 aa).

The protein belongs to the UPF0303 family.

The chain is UPF0303 protein Bxeno_A1932 from Paraburkholderia xenovorans (strain LB400).